A 221-amino-acid chain; its full sequence is U1 small nuclear ribonucleoprotein C (221 aa).

Residues 4–36 form a Matrin-type zinc finger; the sequence is HYCDYCDVFLTHDSVSVRKAHNSGRNHLQNVRE. The tract at residues 80-221 is disordered; it reads GAGPLSGSSD…PHSRTGYGPR (142 aa). A compositionally biased stretch (pro residues) spans 142-158; it reads YSRPPPQGGPYSRPPPD. Positions 178–190 are enriched in low complexity; sequence PLGYGAPLPGAYP. Residues 191-204 are compositionally biased toward pro residues; the sequence is SGPPPNMRGPPPPL.

This sequence belongs to the U1 small nuclear ribonucleoprotein C family. As to quaternary structure, U1 snRNP is composed of the 7 core Sm proteins B/B', D1, D2, D3, E, F and G that assemble in a heptameric protein ring on the Sm site of the small nuclear RNA to form the core snRNP, and at least 3 U1 snRNP-specific proteins U1-70K, U1-A and U1-C. U1-C interacts with U1 snRNA and the 5' splice-site region of the pre-mRNA.

Its subcellular location is the nucleus. Functionally, component of the spliceosomal U1 snRNP, which is essential for recognition of the pre-mRNA 5' splice-site and the subsequent assembly of the spliceosome. U1-C is directly involved in initial 5' splice-site recognition for both constitutive and regulated alternative splicing. The interaction with the 5' splice-site seems to precede base-pairing between the pre-mRNA and the U1 snRNA. Stimulates commitment or early (E) complex formation by stabilizing the base pairing of the 5' end of the U1 snRNA and the 5' splice-site region. The protein is U1 small nuclear ribonucleoprotein C of Mycosarcoma maydis (Corn smut fungus).